A 304-amino-acid polypeptide reads, in one-letter code: Cytochrome c biogenesis protein CcsA (304 aa).

8 helical membrane-spanning segments follow: residues 11-31 (SLGF…FWAV), 37-57 (AGLV…QLIL), 63-83 (GHFP…ACTL), 96-116 (IVAA…SFAL), 141-161 (VIMV…AVLV), 212-232 (TITV…VWAN), 246-263 (TWAL…HTRL), and 275-295 (VAVV…LLGI).

The protein belongs to the CcmF/CycK/Ccl1/NrfE/CcsA family. As to quaternary structure, may interact with ccs1.

The protein resides in the cellular thylakoid membrane. Required during biogenesis of c-type cytochromes (cytochrome c6 and cytochrome f) at the step of heme attachment. This chain is Cytochrome c biogenesis protein CcsA, found in Synechococcus sp. (strain CC9605).